The primary structure comprises 237 residues: Increased recombination centers protein 6 (237 aa).

The protein belongs to the IRC6 family.

Functionally, involved in gross chromosomal rearrangements (GCRs) and telomere healing. This Saccharomyces cerevisiae (strain AWRI1631) (Baker's yeast) protein is Increased recombination centers protein 6 (IRC6).